We begin with the raw amino-acid sequence, 343 residues long: Methylthioribose-1-phosphate isomerase (343 aa).

Substrate-binding positions include 48-50, Arg88, and Gln193; that span reads RGA. Asp234 functions as the Proton donor in the catalytic mechanism. Residue 244–245 coordinates substrate; sequence NK.

The protein belongs to the eIF-2B alpha/beta/delta subunits family. MtnA subfamily.

The catalysed reaction is 5-(methylsulfanyl)-alpha-D-ribose 1-phosphate = 5-(methylsulfanyl)-D-ribulose 1-phosphate. Its pathway is amino-acid biosynthesis; L-methionine biosynthesis via salvage pathway; L-methionine from S-methyl-5-thio-alpha-D-ribose 1-phosphate: step 1/6. Functionally, catalyzes the interconversion of methylthioribose-1-phosphate (MTR-1-P) into methylthioribulose-1-phosphate (MTRu-1-P). This Thermotoga neapolitana (strain ATCC 49049 / DSM 4359 / NBRC 107923 / NS-E) protein is Methylthioribose-1-phosphate isomerase.